The following is a 91-amino-acid chain: Probable Fe(2+)-trafficking protein (91 aa).

The protein belongs to the Fe(2+)-trafficking protein family.

In terms of biological role, could be a mediator in iron transactions between iron acquisition and iron-requiring processes, such as synthesis and/or repair of Fe-S clusters in biosynthetic enzymes. The protein is Probable Fe(2+)-trafficking protein of Acidobacterium capsulatum (strain ATCC 51196 / DSM 11244 / BCRC 80197 / JCM 7670 / NBRC 15755 / NCIMB 13165 / 161).